Consider the following 147-residue polypeptide: MPTYAPKAGDTTRSWYVIDATDVVLGRLAVAAANLLRGKHKPTFAPNVDGGDFVIVINADKVAISGDKLQHKMVYRHSGYPGGLHKRTIGELMQRHPDRVVEKAILGMLPKNRLSRQIQRKLRVYAGPEHPHSAQQPVPYELKQVAQ.

The tract at residues 128 to 147 is disordered; sequence PEHPHSAQQPVPYELKQVAQ.

It belongs to the universal ribosomal protein uL13 family. In terms of assembly, part of the 50S ribosomal subunit.

In terms of biological role, this protein is one of the early assembly proteins of the 50S ribosomal subunit, although it is not seen to bind rRNA by itself. It is important during the early stages of 50S assembly. This is Large ribosomal subunit protein uL13 from Mycobacterium bovis (strain BCG / Pasteur 1173P2).